We begin with the raw amino-acid sequence, 157 residues long: Transcription antitermination protein NusB (157 aa).

It belongs to the NusB family.

Its function is as follows. Involved in transcription antitermination. Required for transcription of ribosomal RNA (rRNA) genes. Binds specifically to the boxA antiterminator sequence of the ribosomal RNA (rrn) operons. The polypeptide is Transcription antitermination protein NusB (Xylella fastidiosa (strain 9a5c)).